A 405-amino-acid polypeptide reads, in one-letter code: Multidrug resistance protein MdtH (405 aa).

A run of 12 helical transmembrane segments spans residues 13 to 33, 34 to 54, 78 to 95, 99 to 116, 139 to 159, 165 to 185, 213 to 233, 243 to 263, 277 to 297, 299 to 319, 340 to 360, and 365 to 385; these read YFLL…FPLI, SIRF…ALGL, MIIA…LMGI, PWLL…GTLF, LLMM…SWLL, LVCL…AWLL, YVLT…MLPI, AAVK…LYPI, LMAG…IEDL, ALFM…PARE, LGLA…YDVG, and IPQL…LGLY.

The protein belongs to the major facilitator superfamily. DHA1 family. MdtH (TC 2.A.1.2.21) subfamily.

Its subcellular location is the cell inner membrane. In Sodalis glossinidius (strain morsitans), this protein is Multidrug resistance protein MdtH.